The sequence spans 249 residues: Small ribosomal subunit protein uS2 (249 aa).

Belongs to the universal ribosomal protein uS2 family.

The protein is Small ribosomal subunit protein uS2 of Polynucleobacter asymbioticus (strain DSM 18221 / CIP 109841 / QLW-P1DMWA-1) (Polynucleobacter necessarius subsp. asymbioticus).